The following is a 143-amino-acid chain: S-adenosylmethionine decarboxylase proenzyme (143 aa).

The Schiff-base intermediate with substrate; via pyruvic acid role is filled by Ser66. A Pyruvic acid (Ser); by autocatalysis modification is found at Ser66. His71 acts as the Proton acceptor; for processing activity in catalysis. The active-site Proton donor; for catalytic activity is Cys86.

Belongs to the prokaryotic AdoMetDC family. Type 1 subfamily. Heterotetramer of two alpha and two beta chains arranged as a dimer of alpha/beta heterodimers. Requires pyruvate as cofactor. Post-translationally, is synthesized initially as an inactive proenzyme. Formation of the active enzyme involves a self-maturation process in which the active site pyruvoyl group is generated from an internal serine residue via an autocatalytic post-translational modification. Two non-identical subunits are generated from the proenzyme in this reaction, and the pyruvate is formed at the N-terminus of the alpha chain, which is derived from the carboxyl end of the proenzyme. The post-translation cleavage follows an unusual pathway, termed non-hydrolytic serinolysis, in which the side chain hydroxyl group of the serine supplies its oxygen atom to form the C-terminus of the beta chain, while the remainder of the serine residue undergoes an oxidative deamination to produce ammonia and the pyruvoyl group blocking the N-terminus of the alpha chain.

The catalysed reaction is S-adenosyl-L-methionine + H(+) = S-adenosyl 3-(methylsulfanyl)propylamine + CO2. Its pathway is amine and polyamine biosynthesis; S-adenosylmethioninamine biosynthesis; S-adenosylmethioninamine from S-adenosyl-L-methionine: step 1/1. Functionally, catalyzes the decarboxylation of S-adenosylmethionine to S-adenosylmethioninamine (dcAdoMet), the propylamine donor required for the synthesis of the polyamines spermine and spermidine from the diamine putrescine. The chain is S-adenosylmethionine decarboxylase proenzyme from Thermococcus kodakarensis (strain ATCC BAA-918 / JCM 12380 / KOD1) (Pyrococcus kodakaraensis (strain KOD1)).